We begin with the raw amino-acid sequence, 644 residues long: Chaperone protein HscA (644 aa).

Belongs to the heat shock protein 70 family.

Functionally, chaperone involved in the maturation of iron-sulfur cluster-containing proteins. Has a low intrinsic ATPase activity which is markedly stimulated by HscB. Involved in the maturation of IscU. The protein is Chaperone protein HscA of Yersinia pseudotuberculosis serotype I (strain IP32953).